The sequence spans 479 residues: Aspartyl/glutamyl-tRNA(Asn/Gln) amidotransferase subunit B (479 aa).

Belongs to the GatB/GatE family. GatB subfamily. In terms of assembly, heterotrimer of A, B and C subunits.

It carries out the reaction L-glutamyl-tRNA(Gln) + L-glutamine + ATP + H2O = L-glutaminyl-tRNA(Gln) + L-glutamate + ADP + phosphate + H(+). It catalyses the reaction L-aspartyl-tRNA(Asn) + L-glutamine + ATP + H2O = L-asparaginyl-tRNA(Asn) + L-glutamate + ADP + phosphate + 2 H(+). In terms of biological role, allows the formation of correctly charged Asn-tRNA(Asn) or Gln-tRNA(Gln) through the transamidation of misacylated Asp-tRNA(Asn) or Glu-tRNA(Gln) in organisms which lack either or both of asparaginyl-tRNA or glutaminyl-tRNA synthetases. The reaction takes place in the presence of glutamine and ATP through an activated phospho-Asp-tRNA(Asn) or phospho-Glu-tRNA(Gln). This chain is Aspartyl/glutamyl-tRNA(Asn/Gln) amidotransferase subunit B, found in Clostridium beijerinckii (strain ATCC 51743 / NCIMB 8052) (Clostridium acetobutylicum).